A 265-amino-acid chain; its full sequence is Hemin import ATP-binding protein HmuV (265 aa).

An ABC transporter domain is found at 10-247 (LVARHLRFQT…ETLAHWYRAD (238 aa)). Residue 42 to 49 (GPNGAGKS) coordinates ATP.

The protein belongs to the ABC transporter superfamily. Heme (hemin) importer (TC 3.A.1.14.5) family. As to quaternary structure, the complex is composed of two ATP-binding proteins (HmuV), two transmembrane proteins (HmuU) and a solute-binding protein (HmuT).

The protein localises to the cell inner membrane. Its function is as follows. Part of the ABC transporter complex HmuTUV involved in hemin import. Responsible for energy coupling to the transport system. The sequence is that of Hemin import ATP-binding protein HmuV from Pectobacterium atrosepticum (strain SCRI 1043 / ATCC BAA-672) (Erwinia carotovora subsp. atroseptica).